The primary structure comprises 238 residues: Small ribosomal subunit protein uS2 (238 aa).

It belongs to the universal ribosomal protein uS2 family.

The chain is Small ribosomal subunit protein uS2 from Moorella thermoacetica (strain ATCC 39073 / JCM 9320).